A 438-amino-acid chain; its full sequence is Phosphoribosylamine--glycine ligase (438 aa).

The ATP-grasp domain occupies 108-316 (RTFMERNEIP…LLEVAEGIVD (209 aa)). 135–194 (VDDFGRPVVVKPIGLTGGKGVKVVGYQLRDNEEAKSYAEELIRRDGRVLIEERTNGVEFT) serves as a coordination point for ATP. Residues glutamine 274, glutamate 286, and asparagine 288 each coordinate Mg(2+). Positions 274, 286, and 288 each coordinate Mn(2+).

It belongs to the GARS family. Mg(2+) is required as a cofactor. Requires Mn(2+) as cofactor.

It catalyses the reaction 5-phospho-beta-D-ribosylamine + glycine + ATP = N(1)-(5-phospho-beta-D-ribosyl)glycinamide + ADP + phosphate + H(+). The protein operates within purine metabolism; IMP biosynthesis via de novo pathway; N(1)-(5-phospho-D-ribosyl)glycinamide from 5-phospho-alpha-D-ribose 1-diphosphate: step 2/2. The sequence is that of Phosphoribosylamine--glycine ligase from Thermococcus gammatolerans (strain DSM 15229 / JCM 11827 / EJ3).